Here is a 153-residue protein sequence, read N- to C-terminus: Ribosome maturation factor RimP (153 aa).

Belongs to the RimP family.

It localises to the cytoplasm. In terms of biological role, required for maturation of 30S ribosomal subunits. The protein is Ribosome maturation factor RimP of Histophilus somni (strain 2336) (Haemophilus somnus).